A 297-amino-acid polypeptide reads, in one-letter code: Bilin biosynthesis protein MpeU (297 aa).

It belongs to the CpcE/RpcE/PecE family.

An enzyme involved in the biosynthesis of bilin. The chain is Bilin biosynthesis protein MpeU (mpeU) from Synechococcus sp. (strain WH8020).